Consider the following 177-residue polypeptide: MSKSTNVSYERVELFENPKVPIEVEDEILEKYAESSLDHDMTVNELPRFFKDLQLEPTIWKLVRNEDVIIEGTDVIDFTKLVRCTCQLLILMNNLTVIDDLWSMLIRNCGRDVDFPQVALRDHVLSVKDLQKISNLIGADQSSGTIEMISCATDGKRLFMTYLDFGCVLGKLGYLKM.

Serine 2 is subject to N-acetylserine. A Glycyl lysine isopeptide (Lys-Gly) (interchain with G-Cter in ubiquitin) cross-link involves residue lysine 19.

Its subcellular location is the nucleus. Its function is as follows. Involved in nucleotide excision repair (NER) of damaged DNA. Required for the repair of RNA polymerase I-transcribed rDNA and RNA polymerase II-transcribed DNA regions. May have a role in stabilizing the DNA repair proteins RAD4 and RAD34. The chain is DNA repair protein RAD33 (RAD33) from Saccharomyces cerevisiae (strain ATCC 204508 / S288c) (Baker's yeast).